A 311-amino-acid polypeptide reads, in one-letter code: Cytosolic Fe-S cluster assembly factor Nubp1 homolog (311 aa).

[4Fe-4S] cluster-binding residues include C9, C23, C26, and C32. 63 to 70 is a binding site for ATP; that stretch reads GKGGVGKS. The [4Fe-4S] cluster site is built by C240 and C243.

This sequence belongs to the Mrp/NBP35 ATP-binding proteins family. NUBP1/NBP35 subfamily. As to quaternary structure, heterotetramer of 2 Nubp1 and 2 Nubp2 chains. [4Fe-4S] cluster serves as cofactor.

Its subcellular location is the cytoplasm. Functionally, component of the cytosolic iron-sulfur (Fe/S) protein assembly (CIA) machinery. Required for maturation of extramitochondrial Fe-S proteins. The Nubp1-Nubp2 heterotetramer forms a Fe-S scaffold complex, mediating the de novo assembly of an Fe-S cluster and its transfer to target apoproteins. In Drosophila yakuba (Fruit fly), this protein is Cytosolic Fe-S cluster assembly factor Nubp1 homolog.